Here is a 547-residue protein sequence, read N- to C-terminus: Serine/threonine-protein kinase pkn3 (547 aa).

Residues 18-288 (YRVEALIGEG…EAFKAELQAV (271 aa)) enclose the Protein kinase domain. ATP-binding positions include 24–32 (IGEGGMGKV) and Lys47. Catalysis depends on Asp142, which acts as the Proton acceptor. The segment covering 290–299 (KERRRMDSAP) has biased composition (basic and acidic residues). The interval 290-327 (KERRRMDSAPRRSANSSAVLAPLPRKSAASPQSDVRDA) is disordered.

It belongs to the protein kinase superfamily. Ser/Thr protein kinase family.

It carries out the reaction L-seryl-[protein] + ATP = O-phospho-L-seryl-[protein] + ADP + H(+). It catalyses the reaction L-threonyl-[protein] + ATP = O-phospho-L-threonyl-[protein] + ADP + H(+). The sequence is that of Serine/threonine-protein kinase pkn3 (pkn3) from Myxococcus xanthus.